A 388-amino-acid chain; its full sequence is DNA replication and repair protein RecF (388 aa).

30-37 serves as a coordination point for ATP; that stretch reads GANGNGKT.

It belongs to the RecF family.

The protein localises to the cytoplasm. The RecF protein is involved in DNA metabolism; it is required for DNA replication and normal SOS inducibility. RecF binds preferentially to single-stranded, linear DNA. It also seems to bind ATP. This is DNA replication and repair protein RecF from Nocardia farcinica (strain IFM 10152).